Consider the following 248-residue polypeptide: Zinc finger CCCH domain-containing protein 36 (248 aa).

2 disordered regions span residues M1–S37 and M87–F110. The segment at G36–P64 adopts a C3H1-type 1 zinc-finger fold. Residues S90 to G103 are compositionally biased toward gly residues. In terms of domain architecture, KH spans S113–V177. The tract at residues A188 to H209 is disordered. A compositionally biased stretch (gly residues) spans P192–S204. The C3H1-type 2 zinc-finger motif lies at N213–A240.

The sequence is that of Zinc finger CCCH domain-containing protein 36 from Arabidopsis thaliana (Mouse-ear cress).